The primary structure comprises 175 residues: Chorismate pyruvate-lyase (175 aa).

Residues M36, R78, L116, and E157 each contribute to the substrate site.

Belongs to the UbiC family. In terms of assembly, monomer.

It is found in the cytoplasm. The enzyme catalyses chorismate = 4-hydroxybenzoate + pyruvate. Its pathway is cofactor biosynthesis; ubiquinone biosynthesis. Functionally, removes the pyruvyl group from chorismate, with concomitant aromatization of the ring, to provide 4-hydroxybenzoate (4HB) for the ubiquinone pathway. This is Chorismate pyruvate-lyase from Hamiltonella defensa subsp. Acyrthosiphon pisum (strain 5AT).